Here is a 505-residue protein sequence, read N- to C-terminus: L-carnitine/gamma-butyrobetaine antiporter (505 aa).

Helical transmembrane passes span 10-30, 51-71, 92-112, 143-163, 195-215, 231-251, 263-283, 316-336, 347-367, 403-423, 446-466, and 475-495; these read IEPKVFFPPLIIVGILCWLTV, WGWAFEWYMVVMLFGWFWLVF, IFMMFASCTSAAVLFWGSIEI, GPLPWATYSFLSVAFAYFFFV, FYLVALIFAMGTSLGLATPLV, LDAIIITCWIILNAICVACGL, SYLSFLMLGWVFIVSGASFIM, WTVFYWAWWVIYAIQMSIFLA, LCFGMVMGLTASTWILWTVLG, LSTATMWGFFILCFIATVTLI, LLVRIGWSVLVGIIGIVLLAL, and AIIAGGCPLFFVNIMVTLSFI.

The protein belongs to the BCCT transporter (TC 2.A.15) family. CaiT subfamily. As to quaternary structure, homotrimer.

It localises to the cell inner membrane. The catalysed reaction is 4-(trimethylamino)butanoate(in) + (R)-carnitine(out) = 4-(trimethylamino)butanoate(out) + (R)-carnitine(in). It participates in amine and polyamine metabolism; carnitine metabolism. Functionally, catalyzes the exchange of L-carnitine for gamma-butyrobetaine. The sequence is that of L-carnitine/gamma-butyrobetaine antiporter from Salmonella agona (strain SL483).